The following is a 98-amino-acid chain: MSFPLTPLEDKIIVKQAEAETQTASGLIIPDNAKEKPQQGEVLAVGPGRRDDEGKRVPMDVKVGDKVLYSKYGGTEVHFKGEEYLIVSARDLLAVVND.

A disordered region spans residues 32-56; that stretch reads NAKEKPQQGEVLAVGPGRRDDEGKR.

The protein belongs to the GroES chaperonin family. As to quaternary structure, heptamer of 7 subunits arranged in a ring. Interacts with the chaperonin GroEL.

It localises to the cytoplasm. Its function is as follows. Together with the chaperonin GroEL, plays an essential role in assisting protein folding. The GroEL-GroES system forms a nano-cage that allows encapsulation of the non-native substrate proteins and provides a physical environment optimized to promote and accelerate protein folding. GroES binds to the apical surface of the GroEL ring, thereby capping the opening of the GroEL channel. This Bifidobacterium animalis subsp. lactis (strain AD011) protein is Co-chaperonin GroES.